We begin with the raw amino-acid sequence, 414 residues long: Membrane protein UL43 (414 aa).

Transmembrane regions (helical) follow at residues 39 to 59 (GFAH…VVLS), 61 to 81 (GPYA…LGFL), 96 to 116 (AWLR…GEAG), 121 to 141 (VPGP…LLVL), 148 to 168 (LFLL…VGGL), and 184 to 204 (AAAL…GDSF). A disordered region spans residues 225 to 253 (PRYAPEDAERPTDHGPLLPSTHHQRSPRV). A compositionally biased stretch (basic and acidic residues) spans 228–237 (APEDAERPTD). A run of 2 helical transmembrane segments spans residues 339 to 359 (GLMF…AVWI) and 383 to 403 (ATLR…GVLV).

This sequence belongs to the alphaherpesvirinae HHV-1 UL43 family.

The protein localises to the membrane. This is Membrane protein UL43 from Homo sapiens (Human).